Consider the following 874-residue polypeptide: MKAAEIREKFLKFFESKGHTIVRSSSLVPGNDPTLLFTNSGMVQFKDVFLGAETRPYSRATTAQRSVRAGGKHNDLENVGYTARHHTFFEMLGNFSFGDYFKRDAIHYAWELLTSVYKLPADKLWVTVYHDDDEAYDIWAKEVGVPAERIIRIGDNKGARYASDNFWQMGDTGPCGPCSEIFYDHGPDVWGGPPGSPEEDGDRYIEIWNLVFMQFNRDAQGNMTRLPKPCVDTGMGLERIAAVLQHVHSNYEIDLFQQLIKASARETGVADLANNSLKVIADHIRACSFLIVDGVIPGNEGRGYVLRRIVRRAIRHGYKLGRKAPFFHKLVADLVAEMGAAYPELKEAEPRVTDVLRQEEERFFETIEHGMSILEAALAELDAAGGKTLDGELAFKLHDTYGFPLDLTADVCRERGVTVDEPAFDDAMARQREQARAAGKFKATQGLEYTGAKTTFHGYEEIAFDDAKVVALYVEGASVGEVKAGESAVVVLDHTPFYAESGGQVGDQGVLANAATRFAVGDTLKVQADVIGHHGELEQGTLKVGDVVRAEIDAARRARTARNHSATHLMHKALRDVLGSHVQQKGSLVDADKTRFDFAHNAPLTDDEIRRVEAIVNEQVLANAPGIVRVMPYDDAVKGGAMALFGEKYGDEVRVLDLGFSRELCGGTHVHRTGDIGLFKIVAEGGVAAGIRRVEAITGDNAVRYVQALDARVNAAAAALKAQPSELLQRIGQVQDQVKSLEKELGALKSKLASSQGDELAQQAVEVGGVHVLAATLDGADAKTLRETVDKLKDKLKSAAIVLAAVDGGKVSLIAGVTADASKKVKAGELVNFVAQQVGGKGGGRPDMAQAGGTEPAKLPAALAGVKGWVEARL.

Residues His-564, His-568, Cys-665, and His-669 each coordinate Zn(2+).

This sequence belongs to the class-II aminoacyl-tRNA synthetase family. It depends on Zn(2+) as a cofactor.

The protein resides in the cytoplasm. It catalyses the reaction tRNA(Ala) + L-alanine + ATP = L-alanyl-tRNA(Ala) + AMP + diphosphate. Catalyzes the attachment of alanine to tRNA(Ala) in a two-step reaction: alanine is first activated by ATP to form Ala-AMP and then transferred to the acceptor end of tRNA(Ala). Also edits incorrectly charged Ser-tRNA(Ala) and Gly-tRNA(Ala) via its editing domain. The sequence is that of Alanine--tRNA ligase from Burkholderia pseudomallei (strain 1106a).